Here is a 167-residue protein sequence, read N- to C-terminus: Large ribosomal subunit protein uL10 (167 aa).

The protein belongs to the universal ribosomal protein uL10 family. As to quaternary structure, part of the ribosomal stalk of the 50S ribosomal subunit. The N-terminus interacts with L11 and the large rRNA to form the base of the stalk. The C-terminus forms an elongated spine to which L12 dimers bind in a sequential fashion forming a multimeric L10(L12)X complex.

In terms of biological role, forms part of the ribosomal stalk, playing a central role in the interaction of the ribosome with GTP-bound translation factors. The sequence is that of Large ribosomal subunit protein uL10 from Ligilactobacillus salivarius (strain UCC118) (Lactobacillus salivarius).